A 231-amino-acid polypeptide reads, in one-letter code: MFKLLLIEDDESLFHEIKDRLTGWSYDVYGIQDFSQVLQEFAAVNPDCVIIDVQLPKFDGFHWCRLIRSRSNVPILFLSSRDHPADMVMSMQLGADDFIQKPFHFDVLIAKIQAMFRRVHHYNTEPSTIKTWCGAAVDAEQNLVSNDKGSVELTKNEMFILKQLIEQKNKIVSREELIRSLWNDERFVSDNTLTVNVNRLRKKLDALQLGAYIETKVGQGYIAKEEDKFYD.

The 114-residue stretch at 3 to 116 (KLLLIEDDES…VLIAKIQAMF (114 aa)) folds into the Response regulatory domain. 4-aspartylphosphate is present on D52. The segment at residues 127–225 (STIKTWCGAA…KVGQGYIAKE (99 aa)) is a DNA-binding region (ompR/PhoB-type).

Post-translationally, phosphorylated by BceS.

It is found in the cytoplasm. Functionally, member of the two-component regulatory system BceS/BceR involved in the regulation of bacitracin resistance. When activated by BceS, binds to the upstream region of the bceAB promoter and up-regulates the expression of these two genes. The polypeptide is Sensory transduction protein BceR (bceR) (Bacillus subtilis (strain 168)).